The primary structure comprises 147 residues: Ribonuclease 4 (147 aa).

The N-terminal stretch at Met-1–Gly-28 is a signal peptide. Gln-29 carries the pyrrolidone carboxylic acid modification. The dUMP site is built by Arg-35, His-40, Lys-68, Asn-71, and Thr-72. His-40 acts as the Proton acceptor in catalysis. Disulfide bonds link Cys-53/Cys-109, Cys-67/Cys-120, Cys-85/Cys-135, and Cys-92/Cys-99. His-144 functions as the Proton donor in the catalytic mechanism. Position 145 (Phe-145) interacts with dUMP.

The protein belongs to the pancreatic ribonuclease family.

The protein localises to the secreted. Functionally, cleaves preferentially after uridine bases. Has antimicrobial activity against uropathogenic E.coli (UPEC). Probably contributes to urinary tract sterility. The protein is Ribonuclease 4 (RNASE4) of Pan troglodytes (Chimpanzee).